A 142-amino-acid chain; its full sequence is UPF0306 protein Ent638_3591 (142 aa).

This sequence belongs to the UPF0306 family.

This chain is UPF0306 protein Ent638_3591, found in Enterobacter sp. (strain 638).